The chain runs to 281 residues: MSFVIATFYHFVKLSNYYDMKDEIKVACDNVELKGTILLAEEGINATVSGERNAIDKIFDFLRSDYRLRDLTWKESAAEYQPFSKMKVRLKREIVNLGVSNLDTSVRGQYIDPDYWDDFISQPDVLVIDTRNDYEVKLGKFKNAINPHTQRFRDFPQWAESFSESKDLKVAMYCTGGIRCEKSTAYMKSLGFNDVYHLKGGILSYLEKTHNKSGNWEGECFVFDDRIAVDHSLAPSDKIKCIFCSSKVSTDELKSVPRGQVVCSDCKSLSIERKLEFNTNL.

The region spanning 121–214 is the Rhodanese domain; it reads SQPDVLVIDT…YLEKTHNKSG (94 aa). The active-site Cysteine persulfide intermediate is the Cys174.

Belongs to the TrhO family.

The enzyme catalyses uridine(34) in tRNA + AH2 + O2 = 5-hydroxyuridine(34) in tRNA + A + H2O. Its function is as follows. Catalyzes oxygen-dependent 5-hydroxyuridine (ho5U) modification at position 34 in tRNAs. In Wolbachia pipientis subsp. Culex pipiens (strain wPip), this protein is tRNA uridine(34) hydroxylase.